A 493-amino-acid chain; its full sequence is Probable vesicular acetylcholine transporter-B (493 aa).

The Cytoplasmic portion of the chain corresponds to 1–39 (MQSTGAPGLAQSAVLQLSAMGERSRELGGALREPERKRR). Residues 40 to 60 (LLLVVVCVALLLDNMLYMVIV) form a helical membrane-spanning segment. At 61–86 (PIIPDYLADLRGERGNSSADLDIQIG) the chain is on the lumenal, vesicle side. The N-linked (GlcNAc...) asparagine glycan is linked to Asn76. Residues 87-107 (VLFASKALLQLLVNPLSGTFI) form a helical membrane-spanning segment. Over 108–113 (DRVGYD) the chain is Cytoplasmic. Residues 114-134 (LPLLIGLLVMFLSTCIFAFAE) traverse the membrane as a helical segment. The Lumenal, vesicle segment spans residues 135–143 (NYGTLFAAR). A helical membrane pass occupies residues 144-164 (SLQGLGSAFADTSGIAMIADK). The Cytoplasmic portion of the chain corresponds to 165–174 (FTEEAERSRA). A helical membrane pass occupies residues 175 to 195 (LGIALAFISFGSLVAPPFGGI). Residues 196–203 (LYEFAGKR) lie on the Lumenal, vesicle side of the membrane. A helical transmembrane segment spans residues 204 to 224 (VPFIVLACVCLADGVLLLTVV). Over 225–247 (KPFSDRTRENMPVGTPIHRLMVD) the chain is Cytoplasmic. Residues 248 to 268 (PYIAVVAGALTVCNIPLAFLE) traverse the membrane as a helical segment. Topologically, residues 269 to 284 (PTIANWMESTMDASKW) are lumenal, vesicle. The chain crosses the membrane as a helical span at residues 285–305 (QMGLVWLPAFLPHVLGVYITV). Residues 306–315 (RLAARYPERQ) are Cytoplasmic-facing. Residues 316–336 (WFYGALGMVIIGASSCTVPAC) form a helical membrane-spanning segment. Over 337 to 347 (KTFGELVFPLC) the chain is Lumenal, vesicle. The chain crosses the membrane as a helical span at residues 348–368 (GICFGIALVDTALLPTLAFLV). Topologically, residues 369–378 (DVRHVSVYGS) are cytoplasmic. A helical membrane pass occupies residues 379 to 399 (VYAIADISYSVAYAMGPVVAG). The Lumenal, vesicle segment spans residues 400 to 406 (QIVHNLG). A helical membrane pass occupies residues 407–427 (FVQLNLGMGLVNVLYAPALLL). Topologically, residues 428–493 (LRPVCQIKPS…EEEESGPESA (66 aa)) are cytoplasmic. The disordered stretch occupies residues 467 to 493 (GLSAGAGTEHGLRGRSEEEEESGPESA). The span at 483–493 (EEEEESGPESA) shows a compositional bias: acidic residues.

Belongs to the major facilitator superfamily. Vesicular transporter family.

The protein localises to the membrane. Involved in acetylcholine transport into synaptic vesicles. The chain is Probable vesicular acetylcholine transporter-B (slc18a3b) from Danio rerio (Zebrafish).